Reading from the N-terminus, the 1414-residue chain is Alpha-(1-&gt;3)-arabinofuranosyltransferase (1414 aa).

9 consecutive transmembrane segments (helical) span residues 57 to 77, 81 to 101, 128 to 148, 167 to 187, 203 to 223, 273 to 293, 302 to 322, 352 to 372, and 389 to 409; these read YLFP…PGWV, LWWA…AEAL, AISS…PVIL, VALM…AAVI, AWWL…LLML, STTA…GLAL, LITM…GGLG, LPLA…GSAP, and VAVA…AWTA. In terms of domain architecture, F5/8 type C spans 687 to 845; it reads YPSDGADLVY…QYDASGFAHP (159 aa). 4 helical membrane passes run 1253-1273, 1297-1317, 1333-1353, and 1364-1384; these read VGLI…LIPV, ALVA…GAAM, VWDN…GSVL, and YVGH…FLAA. Residues 1393 to 1414 are disordered; the sequence is PEPSEDGRSAKPEHTGASAHAG. Over residues 1394–1406 the composition is skewed to basic and acidic residues; it reads EPSEDGRSAKPEH.

The protein localises to the membrane. It catalyses the reaction Adds an alpha-D-arabinofuranosyl group from trans,octacis-decaprenylphospho-beta-D-arabinofuranose at the 3-O-position of an alpha-(1-&gt;5)-arabinofuranan chain attached to a beta-(1-&gt;5)-galactofuranan chain.. It functions in the pathway cell wall biogenesis; cell wall polysaccharide biosynthesis. Its function is as follows. Involved in the biosynthesis of the arabinogalactan (AG) region of the mycolylarabinogalactan-peptidoglycan (mAGP) complex, an essential component of the mycobacterial cell wall. Catalyzes the addition of an arabinofuranosyl (Araf) residue from the sugar donor decaprenyl-phospho-arabinose (DPA) on the C-3 of an alpha-(1-&gt;5)-linked Araf from the arabinan backbone of AG. The chain is Alpha-(1-&gt;3)-arabinofuranosyltransferase (aftD) from Mycolicibacterium smegmatis (strain ATCC 700084 / mc(2)155) (Mycobacterium smegmatis).